The sequence spans 215 residues: Deoxyribose-phosphate aldolase (215 aa).

Residue D89 is the Proton donor/acceptor of the active site. The active-site Schiff-base intermediate with acetaldehyde is the K153. K182 (proton donor/acceptor) is an active-site residue.

Belongs to the DeoC/FbaB aldolase family. DeoC type 1 subfamily.

It is found in the cytoplasm. The enzyme catalyses 2-deoxy-D-ribose 5-phosphate = D-glyceraldehyde 3-phosphate + acetaldehyde. The protein operates within carbohydrate degradation; 2-deoxy-D-ribose 1-phosphate degradation; D-glyceraldehyde 3-phosphate and acetaldehyde from 2-deoxy-alpha-D-ribose 1-phosphate: step 2/2. Catalyzes a reversible aldol reaction between acetaldehyde and D-glyceraldehyde 3-phosphate to generate 2-deoxy-D-ribose 5-phosphate. The polypeptide is Deoxyribose-phosphate aldolase (Lactiplantibacillus plantarum (strain ATCC BAA-793 / NCIMB 8826 / WCFS1) (Lactobacillus plantarum)).